Reading from the N-terminus, the 134-residue chain is ATP synthase epsilon chain (134 aa).

This sequence belongs to the ATPase epsilon chain family. As to quaternary structure, F-type ATPases have 2 components, CF(1) - the catalytic core - and CF(0) - the membrane proton channel. CF(1) has five subunits: alpha(3), beta(3), gamma(1), delta(1), epsilon(1). CF(0) has three main subunits: a, b and c.

The protein localises to the cell membrane. Functionally, produces ATP from ADP in the presence of a proton gradient across the membrane. In Staphylococcus saprophyticus subsp. saprophyticus (strain ATCC 15305 / DSM 20229 / NCIMB 8711 / NCTC 7292 / S-41), this protein is ATP synthase epsilon chain.